Reading from the N-terminus, the 130-residue chain is Small ribosomal subunit protein uS8 (130 aa).

The protein belongs to the universal ribosomal protein uS8 family. As to quaternary structure, part of the 30S ribosomal subunit.

One of the primary rRNA binding proteins, it binds directly to 16S rRNA central domain where it helps coordinate assembly of the platform of the 30S subunit. This is Small ribosomal subunit protein uS8 from Methanothermobacter thermautotrophicus (strain ATCC 29096 / DSM 1053 / JCM 10044 / NBRC 100330 / Delta H) (Methanobacterium thermoautotrophicum).